Reading from the N-terminus, the 496-residue chain is MSFILALDQGTTSSRALVFDHDGTVRGLAQKEFRQIFPEPGLVEHDAEEIWASQLGVAVEAVARAGLSAADIAAIGITNQRETTVVWDRRTGKPIHNAIVWQDRRTAAECDRLKRLGLEATFRARTGLVLDPYFSGTKLAWLLDHLPGARDKAERGELAFGTIDSWLVWNLTGGERHLTDASNASRTLLFNIHEGNWDQELLQLLRIPPAILPEVVPSSQVYGETAARFFAARVPISGIAGDQQAALFGQLCDRPGMVKNTYGTGCFMLMQTGERPVLSERNLLTTVACRLGERTEYALEGSVFAAGAAVQWLRDGLGIIRSSEEVETLAATVPDNGGVYLVPAFAGLGAPHWDPYARGTLLGITRGSTAGHIARATLESIAFQTADLLEAMEADAATPLTELRVDGGATANNLLMQFQADLLGVPVVRPRVRETTALGAAYLAGLAIGYWQDRKELSRLWQAEQAFAPVLERERMAELRYNWNRAVERSKGWAQP.

Residue Thr11 participates in ADP binding. ATP is bound by residues Thr11, Thr12, and Ser13. Thr11 is a binding site for sn-glycerol 3-phosphate. An ADP-binding site is contributed by Arg15. Sn-glycerol 3-phosphate is bound by residues Arg81, Glu82, Tyr133, and Asp242. Glycerol is bound by residues Arg81, Glu82, Tyr133, Asp242, and Gln243. Thr264 and Gly307 together coordinate ADP. 4 residues coordinate ATP: Thr264, Gly307, Gln311, and Gly408. Residues Gly408 and Asn412 each coordinate ADP.

The protein belongs to the FGGY kinase family.

The enzyme catalyses glycerol + ATP = sn-glycerol 3-phosphate + ADP + H(+). The protein operates within polyol metabolism; glycerol degradation via glycerol kinase pathway; sn-glycerol 3-phosphate from glycerol: step 1/1. With respect to regulation, inhibited by fructose 1,6-bisphosphate (FBP). Key enzyme in the regulation of glycerol uptake and metabolism. Catalyzes the phosphorylation of glycerol to yield sn-glycerol 3-phosphate. The sequence is that of Glycerol kinase from Trichlorobacter lovleyi (strain ATCC BAA-1151 / DSM 17278 / SZ) (Geobacter lovleyi).